Consider the following 159-residue polypeptide: Protein-export protein SecB (159 aa).

Belongs to the SecB family. Homotetramer, a dimer of dimers. One homotetramer interacts with 1 SecA dimer.

It is found in the cytoplasm. One of the proteins required for the normal export of preproteins out of the cell cytoplasm. It is a molecular chaperone that binds to a subset of precursor proteins, maintaining them in a translocation-competent state. It also specifically binds to its receptor SecA. This is Protein-export protein SecB from Nitrobacter hamburgensis (strain DSM 10229 / NCIMB 13809 / X14).